Here is a 428-residue protein sequence, read N- to C-terminus: Serine--tRNA ligase (428 aa).

235 to 237 (TAE) contributes to the L-serine binding site. 266–268 (RSE) contacts ATP. An L-serine-binding site is contributed by glutamate 289. Position 353-356 (353-356 (EISS)) interacts with ATP. Serine 389 lines the L-serine pocket.

It belongs to the class-II aminoacyl-tRNA synthetase family. Type-1 seryl-tRNA synthetase subfamily. As to quaternary structure, homodimer. The tRNA molecule binds across the dimer.

Its subcellular location is the cytoplasm. It catalyses the reaction tRNA(Ser) + L-serine + ATP = L-seryl-tRNA(Ser) + AMP + diphosphate + H(+). It carries out the reaction tRNA(Sec) + L-serine + ATP = L-seryl-tRNA(Sec) + AMP + diphosphate + H(+). It participates in aminoacyl-tRNA biosynthesis; selenocysteinyl-tRNA(Sec) biosynthesis; L-seryl-tRNA(Sec) from L-serine and tRNA(Sec): step 1/1. In terms of biological role, catalyzes the attachment of serine to tRNA(Ser). Is also able to aminoacylate tRNA(Sec) with serine, to form the misacylated tRNA L-seryl-tRNA(Sec), which will be further converted into selenocysteinyl-tRNA(Sec). This is Serine--tRNA ligase from Shewanella piezotolerans (strain WP3 / JCM 13877).